The primary structure comprises 236 residues: Protein YIPF6 (236 aa).

Residue Ala-2 is modified to N-acetylalanine. The Cytoplasmic segment spans residues 2-84 (AEAEDSPGEQ…HVLYPRKSNA (83 aa)). A Phosphoserine modification is found at Ser-7. The helical transmembrane segment at 85–105 (LLRDWDLWGPLILCVTLALML) threads the bilayer. Topologically, residues 106 to 116 (QKSSIDGKNDG) are lumenal. The helical transmembrane segment at 117–137 (GGPEFAEVFVIIWFGAVTITL) threads the bilayer. Residues 138–147 (NSKLLGGNIS) are Cytoplasmic-facing. Residues 148–168 (FFQSLCVLGYCILPLNIAMLI) form a helical membrane-spanning segment. Residues 169–185 (CRLLLLAGQGPINFMIR) are Lumenal-facing. A helical membrane pass occupies residues 186 to 206 (LFVVLLMFAWSVVASTAFLAD). Residues 207-213 (SQPPNRK) lie on the Cytoplasmic side of the membrane. The helical transmembrane segment at 214–234 (ALAVYPVFLFYFVISWMILTF) threads the bilayer. Over 235–236 (TP) the chain is Lumenal.

The protein belongs to the YIP1 family. As to quaternary structure, predominantly interacts with YIPF1 or YIPF2, but may also form a ternary complex with YIPF1 and YIPF2. This interaction may stabilize YIPF1 and YIPF2.

The protein resides in the golgi apparatus membrane. Its function is as follows. May be required for stable YIPF1 and YIPF2 protein expression. This chain is Protein YIPF6 (Yipf6), found in Mus musculus (Mouse).